The following is a 195-amino-acid chain: Probable GTP-binding protein EngB (195 aa).

Residues 24-195 (GLTEVALSGR…EIWNFIETYI (172 aa)) form the EngB-type G domain. GTP-binding positions include 32–39 (GRSNVGKS), 59–63 (GKTQT), 77–80 (DVPG), 144–147 (TKED), and 176–178 (YSS). The Mg(2+) site is built by serine 39 and threonine 61.

The protein belongs to the TRAFAC class TrmE-Era-EngA-EngB-Septin-like GTPase superfamily. EngB GTPase family. Requires Mg(2+) as cofactor.

Its function is as follows. Necessary for normal cell division and for the maintenance of normal septation. The sequence is that of Probable GTP-binding protein EngB from Staphylococcus epidermidis (strain ATCC 35984 / DSM 28319 / BCRC 17069 / CCUG 31568 / BM 3577 / RP62A).